The sequence spans 890 residues: Possible lysine-specific histone demethylase 1 (890 aa).

Positions 1–13 (MKPTQFGGSSSKM) are enriched in polar residues. A disordered region spans residues 1–164 (MKPTQFGGSS…TVLSGQEGAV (164 aa)). Residues S24 and S27 each carry the phosphoserine modification. Residues 84 to 109 (NRPSGSGDTASNDKSGSASMGPNNQQ) show a composition bias toward polar residues. A compositionally biased stretch (basic and acidic residues) spans 110–122 (AERRSQSQTRKSE). Positions 123-138 (ANATSSSVSGPSAGNS) are enriched in low complexity. Residues 160–259 (QEGAVFQSRL…FGIFKRLKPI (100 aa)) enclose the SWIRM domain. FAD is bound at residue 267–295 (VIVIGAGISGLAVAHQLQQFGMDVIVLEA). Positions 860–890 (DLSPNLSDSSPSSKKSEENSNSNTADSTELQ) are disordered. Over residues 861–882 (LSPNLSDSSPSSKKSEENSNSN) the composition is skewed to low complexity. The residue at position 866 (S866) is a Phosphoserine.

This sequence belongs to the flavin monoamine oxidase family. As to quaternary structure, component of a complex that contains at least HDAC1/Rpd3, CoRest and Su(var)3-3/Hdm. The cofactor is FAD.

Its subcellular location is the nucleus. The protein resides in the chromosome. Functionally, probable histone demethylase that specifically demethylates 'Lys-4' of histone H3, a specific tag for epigenetic transcriptional activation, thereby acting as a corepressor. Required for heterochromatic gene silencing. Acts by oxidizing the substrate by FAD to generate the corresponding imine that is subsequently hydrolyzed. Demethylates both mono- and tri-methylated 'Lys-4' of histone H3. May also demethylate 'Lys-9' of histone H3, Plays a role in the repression of neuronal genes. This chain is Possible lysine-specific histone demethylase 1 (Su(var)3-3), found in Drosophila melanogaster (Fruit fly).